The following is a 350-amino-acid chain: tRNA dimethylallyltransferase (350 aa).

The segment at 1–20 (MMNTERPAGPLRPPHPPHPP) is disordered. Over residues 10–20 (PLRPPHPPHPP) the composition is skewed to pro residues. 27-34 (GPTASGKT) lines the ATP pocket. 29 to 34 (TASGKT) serves as a coordination point for substrate. 3 interaction with substrate tRNA regions span residues 52 to 55 (DSAL), 176 to 180 (QRIAR), and 273 to 278 (RCVGYR).

This sequence belongs to the IPP transferase family. Monomer. It depends on Mg(2+) as a cofactor.

The catalysed reaction is adenosine(37) in tRNA + dimethylallyl diphosphate = N(6)-dimethylallyladenosine(37) in tRNA + diphosphate. In terms of biological role, catalyzes the transfer of a dimethylallyl group onto the adenine at position 37 in tRNAs that read codons beginning with uridine, leading to the formation of N6-(dimethylallyl)adenosine (i(6)A). In Albidiferax ferrireducens (strain ATCC BAA-621 / DSM 15236 / T118) (Rhodoferax ferrireducens), this protein is tRNA dimethylallyltransferase.